The primary structure comprises 338 residues: Protein SPATA31F3 (338 aa).

Residues valine 7–tryptophan 29 form a helical membrane-spanning segment. The residue at position 152 (serine 152) is a Phosphoserine. Residues aspartate 290–valine 306 show a composition bias toward basic and acidic residues. The disordered stretch occupies residues aspartate 290 to alanine 338.

Belongs to the SPATA31 family.

The protein resides in the membrane. The sequence is that of Protein SPATA31F3 from Homo sapiens (Human).